The primary structure comprises 319 residues: F-box only protein 8 (319 aa).

One can recognise an F-box domain in the interval 68 to 111 (FINLEMLPPELSFTILSYLNATDLCLASCVWQDLANDELLWQGL). Positions 146-276 (FNANPEEGVS…LILLSIDLTS (131 aa)) constitute an SEC7 domain.

High expression in brain, heart, kidney, liver, lung, skeletal muscle, testis, and day-7 embryos.

In terms of biological role, may promote guanine-nucleotide exchange on an ARF. Promotes the activation of ARF through replacement of GDP with GTP (Potential). This Mus musculus (Mouse) protein is F-box only protein 8 (Fbxo8).